We begin with the raw amino-acid sequence, 210 residues long: Nucleoside triphosphate pyrophosphatase (210 aa).

Asp80 (proton acceptor) is an active-site residue.

Belongs to the Maf family. The cofactor is a divalent metal cation.

It is found in the cytoplasm. It carries out the reaction a ribonucleoside 5'-triphosphate + H2O = a ribonucleoside 5'-phosphate + diphosphate + H(+). The catalysed reaction is a 2'-deoxyribonucleoside 5'-triphosphate + H2O = a 2'-deoxyribonucleoside 5'-phosphate + diphosphate + H(+). In terms of biological role, nucleoside triphosphate pyrophosphatase. May have a dual role in cell division arrest and in preventing the incorporation of modified nucleotides into cellular nucleic acids. The sequence is that of Nucleoside triphosphate pyrophosphatase from Mycobacterium sp. (strain JLS).